Consider the following 972-residue polypeptide: Multiple C2 domain and transmembrane region protein 8 (972 aa).

The 107-residue stretch at 1-107 (MMSNLKLGVE…PYSEAVGLPY (107 aa)) folds into the C2 1 domain. The segment at 142–203 (PNLISTKKIP…MMESSLYQAP (62 aa)) is disordered. Over residues 150-159 (IPSKSRHKFH) the composition is skewed to basic residues. A compositionally biased stretch (polar residues) spans 161 to 173 (IPTNESNHSPRGN). The span at 179–194 (PQPPPPQSQTALPPPM) shows a compositional bias: pro residues. 3 consecutive C2 domains span residues 232 to 352 (GGGK…PEWY), 384 to 507 (ALNA…NRWF), and 543 to 669 (YSSD…SHSY). Residues aspartate 265, aspartate 271, aspartate 318, aspartate 320, and aspartate 325 each contribute to the Ca(2+) site. Helical transmembrane passes span 803–823 (IIFLVLVCSPEMILPVMSLCL) and 924–944 (TVVLYVVPFKVFVLLAGLYIM).

It belongs to the MCTP family. Ca(2+) is required as a cofactor. Expressed in root hairs.

The protein localises to the membrane. The protein resides in the vesicle. May function as a signaling molecule by regulating the trafficking of other regulators. This Arabidopsis thaliana (Mouse-ear cress) protein is Multiple C2 domain and transmembrane region protein 8.